Reading from the N-terminus, the 515-residue chain is Protein nucleotidyltransferase YdiU (515 aa).

Positions 101, 103, 104, 124, 136, 137, 194, and 201 each coordinate ATP. Asp-269 functions as the Proton acceptor in the catalytic mechanism. Mg(2+) is bound by residues Asn-270 and Asp-279. Asp-279 contacts ATP.

Belongs to the SELO family. Requires Mg(2+) as cofactor. It depends on Mn(2+) as a cofactor.

It carries out the reaction L-seryl-[protein] + ATP = 3-O-(5'-adenylyl)-L-seryl-[protein] + diphosphate. The catalysed reaction is L-threonyl-[protein] + ATP = 3-O-(5'-adenylyl)-L-threonyl-[protein] + diphosphate. The enzyme catalyses L-tyrosyl-[protein] + ATP = O-(5'-adenylyl)-L-tyrosyl-[protein] + diphosphate. It catalyses the reaction L-histidyl-[protein] + UTP = N(tele)-(5'-uridylyl)-L-histidyl-[protein] + diphosphate. It carries out the reaction L-seryl-[protein] + UTP = O-(5'-uridylyl)-L-seryl-[protein] + diphosphate. The catalysed reaction is L-tyrosyl-[protein] + UTP = O-(5'-uridylyl)-L-tyrosyl-[protein] + diphosphate. Functionally, nucleotidyltransferase involved in the post-translational modification of proteins. It can catalyze the addition of adenosine monophosphate (AMP) or uridine monophosphate (UMP) to a protein, resulting in modifications known as AMPylation and UMPylation. The polypeptide is Protein nucleotidyltransferase YdiU (Cytophaga hutchinsonii (strain ATCC 33406 / DSM 1761 / CIP 103989 / NBRC 15051 / NCIMB 9469 / D465)).